Here is a 448-residue protein sequence, read N- to C-terminus: Nuclear distribution protein PAC1 (448 aa).

The 33-residue stretch at 9-41 (QAEELHKSIIAYLAANNFQDSVTAMRTELNLGE) folds into the LisH domain. The interval 74 to 95 (SATPTSLSNRKQDPASWLPAGP) is disordered. WD repeat units follow at residues 102 to 143 (SHRT…RTVK), 145 to 185 (HTKA…KNIR), 189 to 236 (GHDH…CLKT), 239 to 278 (GHSD…PETK), 283 to 343 (GHEH…IKTL), 345 to 384 (GHDN…KCVK), and 389 to 444 (MHEH…TSLR).

The protein belongs to the WD repeat LIS1/nudF family. Self-associates. Interacts with NDL1 and dynein.

It localises to the cytoplasm. The protein localises to the cytoskeleton. The protein resides in the spindle pole. Functionally, positively regulates the activity of the minus-end directed microtubule motor protein dynein. May enhance dynein-mediated microtubule sliding by targeting dynein to the microtubule plus end. Required for nuclear migration during vegetative growth as well as development. Required for retrograde early endosome (EE) transport from the hyphal tip. Required for localization of dynein to the mitotic spindle poles. Recruits additional proteins to the dynein complex at SPBs. This chain is Nuclear distribution protein PAC1, found in Fusarium vanettenii (strain ATCC MYA-4622 / CBS 123669 / FGSC 9596 / NRRL 45880 / 77-13-4) (Fusarium solani subsp. pisi).